Consider the following 451-residue polypeptide: Cytosolic Fe-S cluster assembly factor NAR1 (451 aa).

C20, C56, C59, C62, C166, C213, C382, and C386 together coordinate [4Fe-4S] cluster.

Belongs to the NARF family.

Its function is as follows. Component of the cytosolic Fe/S protein assembly machinery. Required for maturation of extramitochondrial Fe/S proteins. May play a role in the transfer of pre-assembled Fe/S clusters to target apoproteins. This chain is Cytosolic Fe-S cluster assembly factor NAR1 (NAR1), found in Eremothecium gossypii (strain ATCC 10895 / CBS 109.51 / FGSC 9923 / NRRL Y-1056) (Yeast).